The sequence spans 129 residues: Small ribosomal subunit protein uS11 (129 aa).

This sequence belongs to the universal ribosomal protein uS11 family. As to quaternary structure, part of the 30S ribosomal subunit. Interacts with proteins S7 and S18. Binds to IF-3.

In terms of biological role, located on the platform of the 30S subunit, it bridges several disparate RNA helices of the 16S rRNA. Forms part of the Shine-Dalgarno cleft in the 70S ribosome. The protein is Small ribosomal subunit protein uS11 of Pasteurella multocida (strain Pm70).